The sequence spans 722 residues: Neprilysin-1 (722 aa).

An N-terminal signal peptide occupies residues 1 to 17 (MAVALLVALCVVSSRMA). One can recognise a Peptidase M13 domain in the interval 32 to 722 (VCNSPVCQKA…MNPTHKCLLW (691 aa)). 5 disulfide bridges follow: Cys33/Cys38, Cys56/Cys707, Cys64/Cys667, Cys120/Cys378, and Cys589/Cys719. N-linked (GlcNAc...) asparagine glycans are attached at residues Asn100, Asn184, Asn207, and Asn424. His552 provides a ligand contact to Zn(2+). The active site involves Glu553. A Zn(2+)-binding site is contributed by His556. Asn609 carries an N-linked (GlcNAc...) asparagine glycan. Glu614 contributes to the Zn(2+) binding site. Asp618 functions as the Proton donor in the catalytic mechanism.

The protein belongs to the peptidase M13 family. Zn(2+) is required as a cofactor. In terms of processing, contains 5 disulfide bonds. As to expression, expressed by the venom gland.

It is found in the secreted. The polypeptide is Neprilysin-1 (Trittame loki (Brush-footed trapdoor spider)).